Reading from the N-terminus, the 209-residue chain is Uracil phosphoribosyltransferase (209 aa).

Residues arginine 79, arginine 104, and 131–139 (DPMLATGNS) contribute to the 5-phospho-alpha-D-ribose 1-diphosphate site. Residues isoleucine 194 and 199–201 (GDA) each bind uracil. Position 200 (aspartate 200) interacts with 5-phospho-alpha-D-ribose 1-diphosphate.

This sequence belongs to the UPRTase family. It depends on Mg(2+) as a cofactor.

It carries out the reaction UMP + diphosphate = 5-phospho-alpha-D-ribose 1-diphosphate + uracil. It functions in the pathway pyrimidine metabolism; UMP biosynthesis via salvage pathway; UMP from uracil: step 1/1. With respect to regulation, allosterically activated by GTP. Catalyzes the conversion of uracil and 5-phospho-alpha-D-ribose 1-diphosphate (PRPP) to UMP and diphosphate. The protein is Uracil phosphoribosyltransferase of Rhizobium meliloti (strain 1021) (Ensifer meliloti).